The sequence spans 450 residues: Signal recognition particle 54 kDa protein (450 aa).

GTP-binding positions include 107 to 114 (GIQGSGKT), 188 to 192 (DTAGR), and 247 to 250 (TKLD).

Belongs to the GTP-binding SRP family. SRP54 subfamily. In terms of assembly, part of the signal recognition particle protein translocation system, which is composed of SRP and FtsY. Archaeal SRP consists of a 7S RNA molecule of 300 nucleotides and two protein subunits: SRP54 and SRP19.

The protein localises to the cytoplasm. The catalysed reaction is GTP + H2O = GDP + phosphate + H(+). Functionally, involved in targeting and insertion of nascent membrane proteins into the cytoplasmic membrane. Binds to the hydrophobic signal sequence of the ribosome-nascent chain (RNC) as it emerges from the ribosomes. The SRP-RNC complex is then targeted to the cytoplasmic membrane where it interacts with the SRP receptor FtsY. In Methanococcus maripaludis (strain C6 / ATCC BAA-1332), this protein is Signal recognition particle 54 kDa protein.